The following is a 174-amino-acid chain: MTQTIFMVGARGAGKTTIGKALAQALGYRFVDTDLFMQQTSQMTVAEVVESEGWDGFRLRESMALQAVTAPKTVIATGGGAVLSSENRAFMRDHGRVIYLRASAAVLAKRLAEDPEEAQRPSLTGKPIVEEMLDVLASREALYQDVAHHVLDGTQTPSLVVEQILQMLTGEMVK.

12–17 (GAGKTT) serves as a coordination point for ATP. Residues T16 and D32 each coordinate Mg(2+). D34, R58, and G79 together coordinate substrate. Residues 112-126 (AEDPEEAQRPSLTGK) form an LID domain region. R120 contributes to the ATP binding site. R139 provides a ligand contact to substrate. Q155 provides a ligand contact to ATP.

This sequence belongs to the shikimate kinase family. AroL subfamily. As to quaternary structure, monomer. Requires Mg(2+) as cofactor.

It is found in the cytoplasm. The enzyme catalyses shikimate + ATP = 3-phosphoshikimate + ADP + H(+). It participates in metabolic intermediate biosynthesis; chorismate biosynthesis; chorismate from D-erythrose 4-phosphate and phosphoenolpyruvate: step 5/7. In terms of biological role, catalyzes the specific phosphorylation of the 3-hydroxyl group of shikimic acid using ATP as a cosubstrate. The chain is Shikimate kinase 2 from Yersinia pseudotuberculosis serotype IB (strain PB1/+).